Reading from the N-terminus, the 20-residue chain is Calreticulin (20 aa).

Belongs to the calreticulin family. Post-translationally, glycosylated.

It localises to the endoplasmic reticulum lumen. In terms of biological role, molecular calcium-binding chaperone promoting folding, oligomeric assembly and quality control in the ER via the calreticulin/calnexin cycle. This lectin may interact transiently with almost all of the monoglucosylated glycoproteins that are synthesized in the ER. This chain is Calreticulin, found in Spinacia oleracea (Spinach).